Reading from the N-terminus, the 270-residue chain is Interleukin-2 receptor subunit alpha (270 aa).

An N-terminal signal peptide occupies residues Met-1–Ala-21. The region spanning Gly-22–Pro-84 is the Sushi 1 domain. Over Gly-22–Gln-245 the chain is Extracellular. Cystine bridges form between Cys-24–Cys-67, Cys-49–Cys-80, and Cys-51–Cys-82. N-linked (GlcNAc...) asparagine glycosylation is found at Asn-33 and Asn-70. A disordered region spans residues Ser-87–Gly-124. Positions Arg-98–Thr-108 are enriched in basic and acidic residues. A compositionally biased stretch (polar residues) spans Gly-112–Asn-121. The 68-residue stretch at Gly-124 to Ser-191 folds into the Sushi 2 domain. 2 disulfide bridges follow: Cys-126/Cys-171 and Cys-153/Cys-189. N-linked (GlcNAc...) asparagine glycosylation is found at Asn-164 and Asn-195. The segment at Lys-190 to Ser-225 is disordered. Positions Gln-202–Ser-225 are enriched in polar residues. N-linked (GlcNAc...) asparagine glycosylation is present at Asn-227. The helical transmembrane segment at Leu-246–Leu-264 threads the bilayer. Residues Thr-265–Arg-270 lie on the Cytoplasmic side of the membrane.

In terms of assembly, non-covalent dimer of an alpha and a beta subunit. IL2R exists in 3 different forms: a high affinity dimer, an intermediate affinity monomer (beta subunit), and a low affinity monomer (alpha subunit). The high and intermediate affinity forms also associate with a gamma subunit.

It is found in the membrane. Functionally, receptor for interleukin-2. The receptor is involved in the regulation of immune tolerance by controlling regulatory T cells (TREGs) activity. TREGs suppress the activation and expansion of autoreactive T-cells. This Sus scrofa (Pig) protein is Interleukin-2 receptor subunit alpha (IL2RA).